We begin with the raw amino-acid sequence, 770 residues long: Pyrophosphate-energized vacuolar membrane proton pump 1 (770 aa).

At 1-9 the chain is on the intravacuolar side; the sequence is MVAPALLPE. A helical membrane pass occupies residues 10 to 36; that stretch reads LWTEILVPICAVIGIAFSLFQWYVVSR. At 37 to 88 the chain is on the cytoplasmic side; the sequence is VKLTSDLGASSSGGANNGKNGYGDYLIEEEEGVNDQSVVAKCAEIQTAISEG. The chain crosses the membrane as a helical span at residues 89 to 118; it reads ATSFLFTEYKYVGVFMIFFAAVIFVFLGSV. Over 119–139 the chain is Intravacuolar; it reads EGFSTDNKPCTYDTTRTCKPA. The cysteines at positions 128 and 136 are disulfide-linked. The chain crosses the membrane as a helical span at residues 140–167; it reads LATAAFSTIAFVLGAVTSVLSGFLGMKI. Residues 168–190 are Cytoplasmic-facing; the sequence is ATYANARTTLEARKGVGKAFIVA. The chain crosses the membrane as a helical span at residues 191 to 220; the sequence is FRSGAVMGFLLAASGLLVLYITINVFKIYY. At 221 to 223 the chain is on the intravacuolar side; it reads GDD. Residues 224-252 form a helical membrane-spanning segment; that stretch reads WEGLFEAITGYGLGGSSMALFGRVGGGIY. Topologically, residues 253–290 are cytoplasmic; sequence TKAADVGADLVGKIERNIPEDDPRNPAVIADNVGDNVG. Lys-254 is a binding site for substrate. Mg(2+) is bound by residues Asp-257, Asp-261, and Asp-287. A helical membrane pass occupies residues 291-316; sequence DIAGMGSDLFGSYAEASCAALVVASI. Residues 317 to 324 are Intravacuolar-facing; sequence SSFGINHD. Residues 325–350 traverse the membrane as a helical segment; it reads FTAMCYPLLISSMGILVCLITTLFAT. Residues 351 to 358 are Cytoplasmic-facing; sequence DFFEIKLV. Residues 359–386 traverse the membrane as a helical segment; the sequence is KEIEPALKNQLIISTVIMTVGIAIVSWV. Residues 387-405 are Intravacuolar-facing; that stretch reads GLPTSFTIFNFGTQKVVKN. Residues 406–429 form a helical membrane-spanning segment; that stretch reads WQLFLCVCVGLWAGLIIGFVTEYY. Residues 430–451 are Cytoplasmic-facing; it reads TSNAYSPVQDVADSCRTGAATN. A helical transmembrane segment spans residues 452-476; it reads VIFGLALGYKSVIIPIFAIAISIFV. Residues 477–482 lie on the Intravacuolar side of the membrane; it reads SFSFAA. The chain crosses the membrane as a helical span at residues 483-509; it reads MYGVAVAALGMLSTIATGLAIDAYGPI. The Cytoplasmic segment spans residues 510–538; the sequence is SDNAGGIAEMAGMSHRIRERTDALDAAGN. Mg(2+) contacts are provided by Asp-511 and Asn-538. Residues 539 to 567 form a helical membrane-spanning segment; that stretch reads TTAAIGKGFAIGSAALVSLALFGAFVSRA. Residues 568–577 lie on the Intravacuolar side of the membrane; it reads GIHTVDVLTP. A helical transmembrane segment spans residues 578 to 606; it reads KVIIGLLVGAMLPYWFSAMTMKSVGSAAL. At 607–635 the chain is on the cytoplasmic side; the sequence is KMVEEVRRQFNTIPGLMEGTAKPDYATCV. The chain crosses the membrane as a helical span at residues 636 to 664; sequence KISTDASIKEMIPPGCLVMLTPLIVGFFF. A topological domain (intravacuolar) is located at residue Gly-665. Residues 666-693 traverse the membrane as a helical segment; the sequence is VETLSGVLAGSLVSGVQIAISASNTGGA. Residues 694–736 are Cytoplasmic-facing; sequence WDNAKKYIEAGVSEHAKSLGPKGSEPHKAAVIGDTIGDPLKDT. Mg(2+) contacts are provided by Asp-695 and Asp-731. Substrate is bound at residue Lys-734. A helical membrane pass occupies residues 737–762; the sequence is SGPSLNILIKLMAVESLVFAPFFATH. Residues 763–770 lie on the Intravacuolar side of the membrane; that stretch reads GGILFKYF.

This sequence belongs to the H(+)-translocating pyrophosphatase (TC 3.A.10) family. K(+)-stimulated subfamily. As to quaternary structure, monomer. As to expression, ubiquitous (at protein level). Mostly expressed in vascular tissues, meristems and root pericycle.

The protein localises to the vacuole membrane. It localises to the endosome membrane. The protein resides in the cell membrane. The catalysed reaction is diphosphate + H2O + H(+)(in) = 2 phosphate + 2 H(+)(out). Activated by K(+) and Mg(2+). Inhibited by Ca(2+), N,N'-dicyclohexylcarbodiimide (DCCD), N-ethylmaleimide (NEM) and aminomethylenediphosphonate (AMDP), and, to a lower extent, by fluoride (KF). Contributes to the transtonoplast (from cytosol to vacuole lumen) H(+)-electrochemical potential difference. It establishes a proton gradient of similar and often greater magnitude than the H(+)-ATPase on the same membrane. In addition, facilitates auxin transport by modulating apoplastic pH and regulates auxin-mediated developmental processes. Confers tolerance to NaCl and to drought by increasing ion retention. The protein is Pyrophosphate-energized vacuolar membrane proton pump 1 (AVP1) of Arabidopsis thaliana (Mouse-ear cress).